The sequence spans 274 residues: Formamidopyrimidine-DNA glycosylase (274 aa).

Residue proline 2 is the Schiff-base intermediate with DNA of the active site. Glutamate 3 serves as the catalytic Proton donor. Residue lysine 58 is the Proton donor; for beta-elimination activity of the active site. Residues histidine 91, arginine 110, and lysine 152 each coordinate DNA. The segment at lysine 237–proline 271 adopts an FPG-type zinc-finger fold. The active-site Proton donor; for delta-elimination activity is arginine 261.

Belongs to the FPG family. As to quaternary structure, monomer. Requires Zn(2+) as cofactor.

It catalyses the reaction Hydrolysis of DNA containing ring-opened 7-methylguanine residues, releasing 2,6-diamino-4-hydroxy-5-(N-methyl)formamidopyrimidine.. The catalysed reaction is 2'-deoxyribonucleotide-(2'-deoxyribose 5'-phosphate)-2'-deoxyribonucleotide-DNA = a 3'-end 2'-deoxyribonucleotide-(2,3-dehydro-2,3-deoxyribose 5'-phosphate)-DNA + a 5'-end 5'-phospho-2'-deoxyribonucleoside-DNA + H(+). Involved in base excision repair of DNA damaged by oxidation or by mutagenic agents. Acts as a DNA glycosylase that recognizes and removes damaged bases. Has a preference for oxidized purines, such as 7,8-dihydro-8-oxoguanine (8-oxoG). Has AP (apurinic/apyrimidinic) lyase activity and introduces nicks in the DNA strand. Cleaves the DNA backbone by beta-delta elimination to generate a single-strand break at the site of the removed base with both 3'- and 5'-phosphates. The sequence is that of Formamidopyrimidine-DNA glycosylase from Legionella pneumophila (strain Paris).